A 466-amino-acid polypeptide reads, in one-letter code: Acetylornithine aminotransferase, mitochondrial (466 aa).

Lys-308 is modified (N6-(pyridoxal phosphate)lysine).

Belongs to the class-III pyridoxal-phosphate-dependent aminotransferase family. Requires pyridoxal 5'-phosphate as cofactor.

It localises to the mitochondrion matrix. The catalysed reaction is N(2)-acetyl-L-ornithine + 2-oxoglutarate = N-acetyl-L-glutamate 5-semialdehyde + L-glutamate. The protein operates within amino-acid biosynthesis; L-arginine biosynthesis; N(2)-acetyl-L-ornithine from L-glutamate: step 4/4. This chain is Acetylornithine aminotransferase, mitochondrial (ARG8), found in Debaryomyces hansenii (strain ATCC 36239 / CBS 767 / BCRC 21394 / JCM 1990 / NBRC 0083 / IGC 2968) (Yeast).